The following is a 293-amino-acid chain: Protein Pat (293 aa).

The region spanning 187–287 (LPDIILNPLD…LLLRTRQDRA (101 aa)) is the BEN domain.

As to quaternary structure, interacts with poc1b. As to expression, an mRNA and protein component of germ plasm and primordial germ cells (PGCs) throughout oogenesis and early development, being first localized to the granulo-fibrillar material (GFM) of the mitochondrial cloud in stage I and II oocytes and to the periphery of mature germinal granules both in oocytes and in embryos. Shows some somatic expression including the ectodermal cells of tailbud embryos. In adults, only expressed in ovaries.

The protein localises to the cytoplasm. It localises to the nucleus. Functionally, probably plays a role in germ plasm formation, positioning and maintenance. The chain is Protein Pat from Xenopus laevis (African clawed frog).